The sequence spans 473 residues: Kynurenine 3-monooxygenase (473 aa).

This sequence belongs to the aromatic-ring hydroxylase family. KMO subfamily. The cofactor is FAD.

The protein resides in the mitochondrion outer membrane. The catalysed reaction is L-kynurenine + NADPH + O2 + H(+) = 3-hydroxy-L-kynurenine + NADP(+) + H2O. Its pathway is cofactor biosynthesis; NAD(+) biosynthesis; quinolinate from L-kynurenine: step 1/3. Catalyzes the hydroxylation of L-kynurenine (L-Kyn) to form 3-hydroxy-L-kynurenine (L-3OHKyn). Required for synthesis of quinolinic acid. This Debaryomyces hansenii (strain ATCC 36239 / CBS 767 / BCRC 21394 / JCM 1990 / NBRC 0083 / IGC 2968) (Yeast) protein is Kynurenine 3-monooxygenase.